Reading from the N-terminus, the 373-residue chain is tRNA-specific 2-thiouridylase MnmA (373 aa).

Residues 12–19 (GMSGGVDS) and Met-38 each bind ATP. The interaction with target base in tRNA stretch occupies residues 98-100 (NPD). The Nucleophile role is filled by Cys-103. A disulfide bond links Cys-103 and Cys-200. Gly-127 serves as a coordination point for ATP. The interaction with tRNA stretch occupies residues 150 to 152 (KDQ). The active-site Cysteine persulfide intermediate is Cys-200. The segment at 312-313 (RY) is interaction with tRNA.

This sequence belongs to the MnmA/TRMU family.

It is found in the cytoplasm. The enzyme catalyses S-sulfanyl-L-cysteinyl-[protein] + uridine(34) in tRNA + AH2 + ATP = 2-thiouridine(34) in tRNA + L-cysteinyl-[protein] + A + AMP + diphosphate + H(+). Its function is as follows. Catalyzes the 2-thiolation of uridine at the wobble position (U34) of tRNA, leading to the formation of s(2)U34. The chain is tRNA-specific 2-thiouridylase MnmA from Streptococcus pyogenes serotype M1.